Here is a 74-residue protein sequence, read N- to C-terminus: Brevinin-2Tb (74 aa).

The first 22 residues, 1 to 22, serve as a signal peptide directing secretion; it reads MFTMKKSLLLFFFLGTISLSLC. The propeptide occupies 23–40; the sequence is QEERNADEDDGEMTEEEK. An intrachain disulfide couples Cys68 to Cys74.

Belongs to the frog skin active peptide (FSAP) family. Brevinin subfamily. In terms of tissue distribution, expressed by the skin glands.

It localises to the secreted. Its function is as follows. Antimicrobial peptide. The sequence is that of Brevinin-2Tb from Rana temporaria (European common frog).